The following is a 379-amino-acid chain: Chaperone protein DnaJ (379 aa).

Residues 6–71 (DYYEVLGVDK…QKRSRYDQFG (66 aa)) form the J domain. The CR-type zinc-finger motif lies at 138-220 (GVEREINVSK…CNGKGRLRST (83 aa)). Cysteine 151, cysteine 154, cysteine 168, cysteine 171, cysteine 194, cysteine 197, cysteine 208, and cysteine 211 together coordinate Zn(2+). 4 CXXCXGXG motif repeats span residues 151-158 (CSKCTGSG), 168-175 (CNHCNGTG), 194-201 (CDACKGEG), and 208-215 (CPACNGKG).

The protein belongs to the DnaJ family. In terms of assembly, homodimer. Requires Zn(2+) as cofactor.

It localises to the cytoplasm. Functionally, participates actively in the response to hyperosmotic and heat shock by preventing the aggregation of stress-denatured proteins and by disaggregating proteins, also in an autonomous, DnaK-independent fashion. Unfolded proteins bind initially to DnaJ; upon interaction with the DnaJ-bound protein, DnaK hydrolyzes its bound ATP, resulting in the formation of a stable complex. GrpE releases ADP from DnaK; ATP binding to DnaK triggers the release of the substrate protein, thus completing the reaction cycle. Several rounds of ATP-dependent interactions between DnaJ, DnaK and GrpE are required for fully efficient folding. Also involved, together with DnaK and GrpE, in the DNA replication of plasmids through activation of initiation proteins. In Ruminiclostridium cellulolyticum (strain ATCC 35319 / DSM 5812 / JCM 6584 / H10) (Clostridium cellulolyticum), this protein is Chaperone protein DnaJ.